Here is a 320-residue protein sequence, read N- to C-terminus: GPI-specific phospholipase A2-like PGAP3 (320 aa).

The first 20 residues, 1–20, serve as a signal peptide directing secretion; the sequence is MAGLAARLVLLAGAAALASG. The Lumenal segment spans residues 21–98; sequence SQGDREPVYR…QFHGKWPFSR (78 aa). Asn40 carries an N-linked (GlcNAc...) asparagine glycan. The chain crosses the membrane as a helical span at residues 99–119; it reads FLFFQEPASAVASFLNGLASL. Topologically, residues 120–135 are cytoplasmic; sequence VMLCRYRTFVPASSPM. Residues 136-156 form a helical membrane-spanning segment; the sequence is YHTCVAFAWVSLNAWFWSTVF. Residues 157–169 are Lumenal-facing; the sequence is HTRDTDLTEKMDY. A helical transmembrane segment spans residues 170–190; it reads FCASTVILHSIYLCCVRTVGL. Over 191–193 the chain is Cytoplasmic; sequence QHP. A helical transmembrane segment spans residues 194–214; that stretch reads AVVSAFRALLLLMLTVHVSYL. The Lumenal segment spans residues 215–224; it reads SLIRFDYGYN. Residues 225-245 traverse the membrane as a helical segment; the sequence is LVANVAIGLVNVVWWLAWCLW. Residues 246–257 lie on the Cytoplasmic side of the membrane; that stretch reads NQRRLPHVRKCV. A helical membrane pass occupies residues 258–278; that stretch reads VVVLLLQGLSLLELLDFPPLF. A topological domain (lumenal) is located at residue Trp279. The helical transmembrane segment at 280–299 threads the bilayer; the sequence is VLDAHAIWHISTIPVHVLFF. Over 300–320 the chain is Cytoplasmic; sequence SFLEDDSLYLLKESEDKFKLD.

It belongs to the PGAP3 family. Ubiquitously expressed, with highest levels in thyroid and placenta.

Its subcellular location is the golgi apparatus membrane. Involved in the fatty acid remodeling steps of GPI-anchor maturation where the unsaturated acyl chain at sn-2 of inositol phosphate is replaced by a saturated stearoyl chain. May catalyze the first step of the fatty acid remodeling, by removing the unsaturated acyl chain at sn-2 of inositol phosphate, generating a lyso-GPI intermediate. The fatty acid remodeling steps is critical for the integration of GPI-APs into lipid rafts. This chain is GPI-specific phospholipase A2-like PGAP3, found in Homo sapiens (Human).